A 615-amino-acid chain; its full sequence is Ankyrin repeat and LEM domain-containing protein 1 (615 aa).

ANK repeat units lie at residues 39-71 (DGAAAVHLAAGARHPRGLRCLGALLRQGGDPNA), 75-104 (EALTPLHVAAAWGCRRGLELLLSQGADPAL), and 108-137 (DGLRPLDLALQQGHLECARVLQDLDTRTRT). Positions 138 to 210 (RTRIGAETQE…DKHGSSASPP (73 aa)) are disordered. Positions 271–280 (LNARLQALTL) match the Nuclear export signal motif. Residues 283-294 (PNAAGFQSSPSS) are compositionally biased toward polar residues. The interval 283–315 (PNAAGFQSSPSSMPLLDRSPAHSPPRTPTPGAS) is disordered. In terms of domain architecture, LEM spans 355–399 (HLPVSTVSDLELLKGLRALGENPHPITPFTRQLYHQQLEEAQIAP). A GIY-YIG domain is found at 448–566 (KSSFTYLLLD…ALGIQTLTNQ (119 aa)). Positions 579 to 586 (PPARRRRL) match the Nuclear localization signal motif.

In terms of assembly, interacts (via LEM domain) with BANF1; the interaction may favor BANF1 dimerization. Expression is predominant in adult bone marrow.

It localises to the cytoplasm. Its subcellular location is the nucleus. Endonuclease that probably plays a role in the DNA damage response and DNA repair. The sequence is that of Ankyrin repeat and LEM domain-containing protein 1 (ANKLE1) from Homo sapiens (Human).